The primary structure comprises 319 residues: Taste receptor type 2 member 7 (319 aa).

Over 1–9 the chain is Extracellular; it reads MADKVQTTL. Residues 10–30 traverse the membrane as a helical segment; sequence LFLAVGEFSVGILGNAFIGLV. The Cytoplasmic portion of the chain corresponds to 31 to 55; the sequence is NCMDWVKKRKIASIDLILTSLAISR. Residues 56–76 traverse the membrane as a helical segment; sequence ICLLCVILLDCFILVLYPDVY. Residues 77–94 are Extracellular-facing; that stretch reads ATGKEMRIIDFFWTLTNH. The helical transmembrane segment at 95 to 115 threads the bilayer; sequence LSIWFATCLSIYYXFRIANFF. Topologically, residues 116–128 are cytoplasmic; sequence HPLFLWMKWRIDR. Residues 129–149 traverse the membrane as a helical segment; it reads VISWILLGCVVLSVFISLPAT. Residues 150-187 lie on the Extracellular side of the membrane; sequence ENLNADFRFCVKAKRKTNLTWSCRVNKTQHASTKLFLN. N-linked (GlcNAc...) asparagine glycans are attached at residues Asn167 and Asn175. A helical membrane pass occupies residues 188 to 208; that stretch reads LATLLPFCVCLMSFFLLILSL. Over 209–235 the chain is Cytoplasmic; sequence RRHIRRMQLSATGCRDPSTEAHVRALK. Residues 236–256 form a helical membrane-spanning segment; it reads AVISFLLLFIAYYLSFLVATS. Residues 257 to 266 are Extracellular-facing; that stretch reads SYFMPETELA. A helical transmembrane segment spans residues 267 to 287; sequence VIFGESIALIYPSSHSFILIL. Over 288–319 the chain is Cytoplasmic; that stretch reads GNNKLRHASLKVIWKVMSILKGRKFQQHKQIG.

Belongs to the G-protein coupled receptor T2R family.

It is found in the membrane. In terms of biological role, gustducin-coupled receptor implicated in the perception of bitter compounds in the oral cavity and the gastrointestinal tract. Signals through PLCB2 and the calcium-regulated cation channel TRPM5. The sequence is that of Taste receptor type 2 member 7 (TAS2R7) from Pan troglodytes (Chimpanzee).